A 304-amino-acid polypeptide reads, in one-letter code: UDP-3-O-acyl-N-acetylglucosamine deacetylase (304 aa).

Residues histidine 78, histidine 237, and aspartate 241 each contribute to the Zn(2+) site. The active-site Proton donor is the histidine 264.

Belongs to the LpxC family. Zn(2+) serves as cofactor.

The enzyme catalyses a UDP-3-O-[(3R)-3-hydroxyacyl]-N-acetyl-alpha-D-glucosamine + H2O = a UDP-3-O-[(3R)-3-hydroxyacyl]-alpha-D-glucosamine + acetate. Its pathway is glycolipid biosynthesis; lipid IV(A) biosynthesis; lipid IV(A) from (3R)-3-hydroxytetradecanoyl-[acyl-carrier-protein] and UDP-N-acetyl-alpha-D-glucosamine: step 2/6. Catalyzes the hydrolysis of UDP-3-O-myristoyl-N-acetylglucosamine to form UDP-3-O-myristoylglucosamine and acetate, the committed step in lipid A biosynthesis. This is UDP-3-O-acyl-N-acetylglucosamine deacetylase from Legionella pneumophila (strain Lens).